We begin with the raw amino-acid sequence, 150 residues long: Large ribosomal subunit protein bL9 (150 aa).

The protein belongs to the bacterial ribosomal protein bL9 family.

In terms of biological role, binds to the 23S rRNA. This is Large ribosomal subunit protein bL9 from Shewanella sediminis (strain HAW-EB3).